The following is a 274-amino-acid chain: Ribosomal RNA small subunit methyltransferase A (274 aa).

S-adenosyl-L-methionine contacts are provided by histidine 15, leucine 17, glycine 42, glutamate 64, aspartate 89, and asparagine 109.

Belongs to the class I-like SAM-binding methyltransferase superfamily. rRNA adenine N(6)-methyltransferase family. RsmA subfamily.

The protein resides in the cytoplasm. It catalyses the reaction adenosine(1518)/adenosine(1519) in 16S rRNA + 4 S-adenosyl-L-methionine = N(6)-dimethyladenosine(1518)/N(6)-dimethyladenosine(1519) in 16S rRNA + 4 S-adenosyl-L-homocysteine + 4 H(+). Functionally, specifically dimethylates two adjacent adenosines (A1518 and A1519) in the loop of a conserved hairpin near the 3'-end of 16S rRNA in the 30S particle. May play a critical role in biogenesis of 30S subunits. This is Ribosomal RNA small subunit methyltransferase A from Synechococcus sp. (strain RCC307).